The chain runs to 223 residues: N-acetylmuramic acid 6-phosphate phosphatase (223 aa).

The Nucleophile role is filled by Asp-9. Mg(2+) is bound by residues Asp-9, Asp-11, and Asp-168. Asp-11 (proton donor) is an active-site residue.

The protein belongs to the HAD-like hydrolase superfamily. CbbY/CbbZ/Gph/YieH family. Phosphatase MupP subfamily. The cofactor is Mg(2+).

It carries out the reaction N-acetyl-D-muramate 6-phosphate + H2O = N-acetyl-D-muramate + phosphate. Its pathway is cell wall biogenesis; peptidoglycan recycling. Specifically catalyzes the dephosphorylation of N-acetylmuramate 6-phosphate (MurNAc-6P) to MurNac. Is involved in peptidoglycan recycling as part of a cell wall recycling pathway that bypasses de novo biosynthesis of the peptidoglycan precursor UDP-MurNAc. Plays a role in intrinsic resistance to fosfomycin, which targets the de novo synthesis of UDP-MurNAc. Shows a very low activity on GlcNAc-6P, and neither alpha-1-phosphorylated MurNAc, GlcNAc, or glucose nor glucosamine-6P or glucose-6P can be used as a substrate. The sequence is that of N-acetylmuramic acid 6-phosphate phosphatase from Pseudomonas putida (strain ATCC 47054 / DSM 6125 / CFBP 8728 / NCIMB 11950 / KT2440).